The primary structure comprises 500 residues: Probable cytosol aminopeptidase (500 aa).

The Mn(2+) site is built by K262 and D267. K274 is an active-site residue. Mn(2+) is bound by residues D285, D344, and E346. R348 is a catalytic residue.

The protein belongs to the peptidase M17 family. Requires Mn(2+) as cofactor.

It is found in the cytoplasm. It carries out the reaction Release of an N-terminal amino acid, Xaa-|-Yaa-, in which Xaa is preferably Leu, but may be other amino acids including Pro although not Arg or Lys, and Yaa may be Pro. Amino acid amides and methyl esters are also readily hydrolyzed, but rates on arylamides are exceedingly low.. The enzyme catalyses Release of an N-terminal amino acid, preferentially leucine, but not glutamic or aspartic acids.. Its function is as follows. Presumably involved in the processing and regular turnover of intracellular proteins. Catalyzes the removal of unsubstituted N-terminal amino acids from various peptides. This chain is Probable cytosol aminopeptidase, found in Ehrlichia ruminantium (strain Gardel).